Consider the following 290-residue polypeptide: 4-hydroxybenzoate octaprenyltransferase (290 aa).

A run of 9 helical transmembrane segments spans residues 20–40 (IGILLLLWPTLWGLWLAAEGV), 43–63 (LDILLIFVLGTVLMRSAGCVV), 92–112 (EALLLAAGLSLVAFLLIQPLN), 114–131 (LTIELSFVALFLAASYPF), 135–155 (FFAMPQAYLGIAFSFGIPMAF), 160–180 (GEVPFPAWFLMGANLLWVIAY), 209–229 (VVGVVLCHMAFLAGMVAIGLL), 231–251 (NLGVIYYIGLATALGLILYQY), and 266–286 (FLHNNWVGATIFAGIVLDYLV).

This sequence belongs to the UbiA prenyltransferase family. It depends on Mg(2+) as a cofactor.

The protein resides in the cell inner membrane. It catalyses the reaction all-trans-octaprenyl diphosphate + 4-hydroxybenzoate = 4-hydroxy-3-(all-trans-octaprenyl)benzoate + diphosphate. The protein operates within cofactor biosynthesis; ubiquinone biosynthesis. Catalyzes the prenylation of para-hydroxybenzoate (PHB) with an all-trans polyprenyl group. Mediates the second step in the final reaction sequence of ubiquinone-8 (UQ-8) biosynthesis, which is the condensation of the polyisoprenoid side chain with PHB, generating the first membrane-bound Q intermediate 3-octaprenyl-4-hydroxybenzoate. The polypeptide is 4-hydroxybenzoate octaprenyltransferase (Nitrosospira multiformis (strain ATCC 25196 / NCIMB 11849 / C 71)).